A 277-amino-acid polypeptide reads, in one-letter code: Sarcosine/dimethylglycine N-methyltransferase (277 aa).

Belongs to the methyltransferase superfamily. In terms of assembly, monomer.

It carries out the reaction sarcosine + 2 S-adenosyl-L-methionine = glycine betaine + 2 S-adenosyl-L-homocysteine + 2 H(+). The catalysed reaction is sarcosine + S-adenosyl-L-methionine = N,N-dimethylglycine + S-adenosyl-L-homocysteine + H(+). The enzyme catalyses N,N-dimethylglycine + S-adenosyl-L-methionine = glycine betaine + S-adenosyl-L-homocysteine + H(+). Its pathway is amine and polyamine biosynthesis; betaine biosynthesis via glycine pathway; betaine from glycine: step 2/3. The protein operates within amine and polyamine biosynthesis; betaine biosynthesis via glycine pathway; betaine from glycine: step 3/3. With respect to regulation, inhibited by n-butylic acid and S-adenosyl-L-homocysteine. Catalyzes the methylation of sarcosine and dimethylglycine to dimethylglycine and betaine, respectively, with S-adenosylmethionine (AdoMet) acting as the methyl donor. Activity with sarcosine is much weaker than activity with dimethylglycine. This chain is Sarcosine/dimethylglycine N-methyltransferase, found in Aphanothece halophytica.